Reading from the N-terminus, the 373-residue chain is Beta sliding clamp (373 aa).

Belongs to the beta sliding clamp family. Forms a ring-shaped head-to-tail homodimer around DNA which binds and tethers DNA polymerases and other proteins to the DNA. The DNA replisome complex has a single clamp-loading complex (3 tau and 1 each of delta, delta', psi and chi subunits) which binds 3 Pol III cores (1 core on the leading strand and 2 on the lagging strand) each with a beta sliding clamp dimer. Additional proteins in the replisome are other copies of gamma, psi and chi, Ssb, DNA helicase and RNA primase.

The protein localises to the cytoplasm. Functionally, confers DNA tethering and processivity to DNA polymerases and other proteins. Acts as a clamp, forming a ring around DNA (a reaction catalyzed by the clamp-loading complex) which diffuses in an ATP-independent manner freely and bidirectionally along dsDNA. Initially characterized for its ability to contact the catalytic subunit of DNA polymerase III (Pol III), a complex, multichain enzyme responsible for most of the replicative synthesis in bacteria; Pol III exhibits 3'-5' exonuclease proofreading activity. The beta chain is required for initiation of replication as well as for processivity of DNA replication. The sequence is that of Beta sliding clamp (dnaN) from Mycoplasmopsis pulmonis (strain UAB CTIP) (Mycoplasma pulmonis).